Here is a 1295-residue protein sequence, read N- to C-terminus: Serine protease sat autotransporter (1295 aa).

A signal peptide spans 1 to 49 (MNKIYSLKYSAATGGLIAVSELAKRVSGKTNRKLVATMLSLAVAGTVNA). Positions 51-300 (NIDISNVWAR…TKYNDKLVSE (250 aa)) constitute a Peptidase S6 domain. Active-site charge relay system residues include histidine 121, aspartate 149, and serine 256. An Autotransporter domain is found at 1029 to 1295 (DINGESGAWA…AINANFRYSF (267 aa)).

Post-translationally, cleaved to release the mature protein from the outer membrane.

Its subcellular location is the periplasm. The protein localises to the secreted. The protein resides in the cell surface. It localises to the cell outer membrane. Inhibited by phenylmethylsulfonyl fluoride and Pefabloc. Its function is as follows. Shows serine protease activity and displays cytophatic activity, including elongation, rounding, and detachment of a proportion of the cells from monolayer in culture. Triggers vacuolation within the cytoplasm of the human bladder and kidney cells. The protein is Serine protease sat autotransporter (sat) of Escherichia coli O6:H1 (strain CFT073 / ATCC 700928 / UPEC).